A 351-amino-acid chain; its full sequence is Protein RecA (351 aa).

Position 73–80 (73–80 (GPESSGKT)) interacts with ATP.

Belongs to the RecA family.

The protein localises to the cytoplasm. Can catalyze the hydrolysis of ATP in the presence of single-stranded DNA, the ATP-dependent uptake of single-stranded DNA by duplex DNA, and the ATP-dependent hybridization of homologous single-stranded DNAs. It interacts with LexA causing its activation and leading to its autocatalytic cleavage. In Herbaspirillum seropedicae, this protein is Protein RecA.